A 522-amino-acid chain; its full sequence is Serine/threonine protein phosphatase 2A 59 kDa regulatory subunit B' gamma isoform (522 aa).

The interval Met1–Gln74 is disordered. The span at Pro35–Asn58 shows a compositional bias: low complexity. Over residues Ala63 to Gln74 the composition is skewed to polar residues.

This sequence belongs to the phosphatase 2A regulatory subunit B56 family. PP2A consists of a common heteromeric enzyme, composed of a catalytic subunit (subunits C), a constant regulatory subunit (subunit A), and a variety of regulatory subunits such as subunits B (the R2/B/PR55/B55, R3/B''/PR72/PR130/PR59 and R5/B'/B56 families). Interacts with BRI1. Interacts with IGMT1 and IGMT4. Interacts with ACO3 in the cytosol. In terms of tissue distribution, expressed ubiquitously at low levels. Expressed in roots, emerging lateral roots, cotyledons, leaves, floral stalks and flowers.

It localises to the cytoplasm. The protein resides in the cytosol. Its subcellular location is the nucleus. Functionally, the B regulatory subunit may modulate substrate selectivity and catalytic activity, and may also direct the localization of the catalytic enzyme to a particular subcellular compartment. Required for the formation of the PP2A holoenzyme that negatively regulates brassinosteroid signaling by dephosphorylating and inactivating BRI1 in the cytoplasm. Seems to be functionally connected with CPR5 and may mediate the negative regulation of defense reactions and senescence under low irradiances. May contribute to the epigenetic regulation of defense gene expression. Involved in the control of methoxylation of indole glucosinolates and formation of 4-methoxy- indol-3-yl-methyl glucosinolate in leaves, through direct interaction with indole glucosinolate methyltransferases. Involved in growth regulation and stress signaling. Involved in the regulation of reactive oxygen species (ROS) signaling and maintenance of cellular ROS homeostasis. Required to control the level of ACO3 phosphorylation in the cytoplasm. Regulates hydrogen peroxide metabolism by controlling the abundance of AOX1A and AXO3/AOX1D in leaf mitochondria. May mediate dephosphorylation of CRT1 and promote the degradation of unfolded proteins in endoplasmic reticulum (ER). Involved in the regulation of flowering time by repressing FLC, the main flowering repressor gene. The sequence is that of Serine/threonine protein phosphatase 2A 59 kDa regulatory subunit B' gamma isoform (B'GAMMA) from Arabidopsis thaliana (Mouse-ear cress).